Reading from the N-terminus, the 213-residue chain is MSSPSSLTQRNPTSSQEQSESVPQLRRQTSQHAVMSQTLTSAANLANLLPTGTLLAFTLLIPVFTSNGSCDYPTQVLTIVLLTLLSISCFLSSFTDSVKAEDGNVYYGFATRKGMWVFDYPDPDGLGLPNLSKYRIRIIDWIHAVLSVLVFGAVALRDKNAVSCFYPAPEQETKKVLDIVPMGVGVICGMLFLVFPARRHGIGYPVTGDGGRR.

The disordered stretch occupies residues 1 to 27 (MSSPSSLTQRNPTSSQEQSESVPQLRR). A run of 4 helical transmembrane segments spans residues 45–65 (LANL…PVFT), 74–94 (TQVL…LSSF), 136–156 (IRII…AVAL), and 176–196 (VLDI…LVFP).

This sequence belongs to the plant DMP1 protein family. In terms of tissue distribution, expressed in leaves, siliques and roots (e.g. root hairs).

It localises to the endoplasmic reticulum membrane. Its function is as follows. Involved in membrane remodeling. This Arabidopsis thaliana (Mouse-ear cress) protein is Protein DMP3.